We begin with the raw amino-acid sequence, 450 residues long: Sulfide:quinone oxidoreductase, mitochondrial (450 aa).

Residues 53–54, Glu75, Gln83, and Val118 contribute to the FAD site; that span reads AG. An N6-acetyllysine mark is found at Lys134 and Lys173. Cys201 (cysteine persulfide intermediate) is an active-site residue. An intrachain disulfide couples Cys201 to Cys379. Asp336 is an FAD binding site. Ser343 carries the phosphoserine modification. FAD is bound at residue 344-347; that stretch reads KTAA. The Cysteine persulfide intermediate role is filled by Cys379.

The protein belongs to the SQRD family. It depends on FAD as a cofactor.

The protein resides in the mitochondrion. The catalysed reaction is ubiquinone-10 + hydrogen sulfide + sulfite + 2 H(+) = ubiquinol-10 + thiosulfate. The enzyme catalyses a quinone + hydrogen sulfide + glutathione + H(+) = S-sulfanylglutathione + a quinol. It catalyses the reaction ubiquinone-10 + hydrogen sulfide + glutathione + H(+) = S-sulfanylglutathione + ubiquinol-10. Functionally, catalyzes the oxidation of hydrogen sulfide with the help of a quinone, such as ubiquinone-10, giving rise to thiosulfate and ultimately to sulfane (molecular sulfur) atoms. Requires an additional electron acceptor; can use sulfite, sulfide or cyanide (in vitro). It is believed the in vivo electron acceptor is glutathione. This is Sulfide:quinone oxidoreductase, mitochondrial from Mus musculus (Mouse).